The following is a 498-amino-acid chain: ATP synthase subunit alpha 1 (498 aa).

This sequence belongs to the ATPase alpha/beta chains family. F-type ATPases have 2 components, CF(1) - the catalytic core - and CF(0) - the membrane proton channel. CF(1) has five subunits: alpha(3), beta(3), gamma(1), delta(1), epsilon(1). CF(0) has three main subunits: a(1), b(2) and c(9-12). The alpha and beta chains form an alternating ring which encloses part of the gamma chain. CF(1) is attached to CF(0) by a central stalk formed by the gamma and epsilon chains, while a peripheral stalk is formed by the delta and b chains.

Its subcellular location is the cell membrane. The catalysed reaction is ATP + H2O + 4 H(+)(in) = ADP + phosphate + 5 H(+)(out). Produces ATP from ADP in the presence of a proton gradient across the membrane. The alpha chain is a regulatory subunit. This Listeria monocytogenes serovar 1/2a (strain ATCC BAA-679 / EGD-e) protein is ATP synthase subunit alpha 1.